The chain runs to 257 residues: Enolase-phosphatase E1 (257 aa).

2 residues coordinate Mg(2+): Asp16 and Glu18. Residues Ser150–Ser151 and Lys184 contribute to the substrate site. A Mg(2+)-binding site is contributed by Asp209.

The protein belongs to the HAD-like hydrolase superfamily. MasA/MtnC family. Monomer. The cofactor is Mg(2+).

The protein resides in the cytoplasm. It localises to the nucleus. The enzyme catalyses 5-methylsulfanyl-2,3-dioxopentyl phosphate + H2O = 1,2-dihydroxy-5-(methylsulfanyl)pent-1-en-3-one + phosphate. Its pathway is amino-acid biosynthesis; L-methionine biosynthesis via salvage pathway; L-methionine from S-methyl-5-thio-alpha-D-ribose 1-phosphate: step 3/6. It participates in amino-acid biosynthesis; L-methionine biosynthesis via salvage pathway; L-methionine from S-methyl-5-thio-alpha-D-ribose 1-phosphate: step 4/6. Bifunctional enzyme that catalyzes the enolization of 2,3-diketo-5-methylthiopentyl-1-phosphate (DK-MTP-1-P) into the intermediate 2-hydroxy-3-keto-5-methylthiopentenyl-1-phosphate (HK-MTPenyl-1-P), which is then dephosphorylated to form the acireductone 1,2-dihydroxy-3-keto-5-methylthiopentene (DHK-MTPene). This Mus musculus (Mouse) protein is Enolase-phosphatase E1 (Enoph1).